Here is a 384-residue protein sequence, read N- to C-terminus: Aryl-alcohol dehydrogenase GME11368 (384 aa).

D69 contributes to the NADP(+) binding site. Y74 (proton donor) is an active-site residue. NADP(+) contacts are provided by residues 177-178 (SD), Q203, and 301-309 (RKPEHLKAN).

This sequence belongs to the aldo/keto reductase family. Aldo/keto reductase 2 subfamily.

The protein operates within secondary metabolite biosynthesis. Functionally, aryl-alcohol dehydrogenase; part of the gene cluster that mediates the biosynthesis of dibenzodioxocinones such as pestalotiollide B, a novel class of inhibitors against cholesterol ester transfer protein (CEPT). The biosynthesis initiates from condensation of acetate and malonate units catalyzed by the non-reducing PKS pks8/GME11356. Pks8/GME11356 lacks a thioesterase (TE) domain, which is important to the cyclizing of the third ring of atrochrysone carboxylic acid, and the esterase GME11355 might play the role of TE and catalyzes the cyclization reaction of the C ring. The lactamase-like protein GME11357 (or other beta-lactamases in Pestalotiopsis microspora) probably hydrolyzes the thioester bond between the ACP of pks8/GME11356 and the intermediate to release atrochrysone carboxylic acid, which is spontaneously dehydrates to form endocrocin anthrone. Endocrocin anthrone is further converted to emodin via the endocrocin intermediate. Emodin is then oxidized by several enzymes such as the Baeyer-Villiger oxidase GME11358, the oxidoreductase GME11367, the short chain dehydrogenase/reductase GME11373, as well as by other oxidoreductases from the cluster, to modify the A and C rings and open the B ring, and finally yield monodictyphenone. The prenyltransferase GME11375 may catalyze the addition reaction between the C5 side chains and the carbon bone of dibenzodioxocinones. The remaining biochemical reactions to the final product dibenzodioxocinones should be methylation catalyzed by methyltransferase GME11366 and reduction and lactonization reaction catalyzed by a series of oxidordeuctases. The chain is Aryl-alcohol dehydrogenase GME11368 from Pestalotiopsis microspora.